We begin with the raw amino-acid sequence, 197 residues long: Beta-crystallin A2 (197 aa).

Residues 1-11 (MSSAPAPGPAP) are N-terminal arm. 2 Beta/gamma crystallin 'Greek key' domains span residues 12–52 (ASLT…KVEN) and 53–99 (GVWV…RPVL). Positions 100-105 (CANHND) are connecting peptide. Beta/gamma crystallin 'Greek key' domains are found at residues 106–147 (SRVT…KVSS) and 148–196 (GAWV…RRVQ).

Belongs to the beta/gamma-crystallin family. Homo/heterodimer, or complexes of higher-order. The structure of beta-crystallin oligomers seems to be stabilized through interactions between the N-terminal arms.

Its function is as follows. Crystallins are the dominant structural components of the vertebrate eye lens. The chain is Beta-crystallin A2 (CRYBA2) from Homo sapiens (Human).